A 219-amino-acid chain; its full sequence is 2-C-methyl-D-erythritol 4-phosphate cytidylyltransferase (219 aa).

The protein belongs to the IspD/TarI cytidylyltransferase family. IspD subfamily.

The enzyme catalyses 2-C-methyl-D-erythritol 4-phosphate + CTP + H(+) = 4-CDP-2-C-methyl-D-erythritol + diphosphate. It functions in the pathway isoprenoid biosynthesis; isopentenyl diphosphate biosynthesis via DXP pathway; isopentenyl diphosphate from 1-deoxy-D-xylulose 5-phosphate: step 2/6. Functionally, catalyzes the formation of 4-diphosphocytidyl-2-C-methyl-D-erythritol from CTP and 2-C-methyl-D-erythritol 4-phosphate (MEP). The chain is 2-C-methyl-D-erythritol 4-phosphate cytidylyltransferase from Chlamydia trachomatis serovar L2 (strain ATCC VR-902B / DSM 19102 / 434/Bu).